The chain runs to 133 residues: Aspartate 1-decarboxylase (133 aa).

Serine 26 functions as the Schiff-base intermediate with substrate; via pyruvic acid in the catalytic mechanism. Serine 26 is modified (pyruvic acid (Ser)). A substrate-binding site is contributed by threonine 58. Tyrosine 59 acts as the Proton donor in catalysis. 74 to 76 (GAA) serves as a coordination point for substrate.

Belongs to the PanD family. In terms of assembly, heterooctamer of four alpha and four beta subunits. Requires pyruvate as cofactor. Is synthesized initially as an inactive proenzyme, which is activated by self-cleavage at a specific serine bond to produce a beta-subunit with a hydroxyl group at its C-terminus and an alpha-subunit with a pyruvoyl group at its N-terminus.

It localises to the cytoplasm. It catalyses the reaction L-aspartate + H(+) = beta-alanine + CO2. The protein operates within cofactor biosynthesis; (R)-pantothenate biosynthesis; beta-alanine from L-aspartate: step 1/1. Functionally, catalyzes the pyruvoyl-dependent decarboxylation of aspartate to produce beta-alanine. The chain is Aspartate 1-decarboxylase from Legionella pneumophila (strain Lens).